The sequence spans 526 residues: Cytochrome P450 monooxygeanse terK (526 aa).

A helical membrane pass occupies residues 21–43 (NWGQLTGALLFLAACTWIYLPAF). Cys-465 lines the heme pocket.

Belongs to the cytochrome P450 family. Requires heme as cofactor.

It is found in the membrane. The protein operates within secondary metabolite biosynthesis. Cytochrome P450 monooxygeanse; part of the gene cluster that mediates the biosynthesis of terpendoles, indole-diterpene (IDT) mycotoxins including terpendole I, terpendole K, terpendole C, as well as the kinesin Eg5 inhibitor terpendole E. Terpendoles biosynthesis begins with the synthesis of geranylgeranyl diphosphate (GGPP) by a yet unidentified GGPP synthase. Condensation of indole-3-glycerol phosphate with GGPP by the prenyltransferase terC then forms 3-geranylgeranylindole (3-GGI), followed by epoxidation and cyclization of this intermediate (by the FAD-dependent monooxygeanse terM and the terpene cyclase terB) to form paspaline. The cytochrome monooxygenase terQ then hydroxylates paspalline at C-11 to yield terpendole E. The cytochrome monooxygenase terP converts terpendole E to 13-desoxyterpendole I, and terQ converts 13-desoxyterpendole I into terpendole I. TerF and terK are required for conversion of terpendole I to terpendole C which is further converted to terpendole K. This is Cytochrome P450 monooxygeanse terK from Tolypocladium album (Soil fungus).